We begin with the raw amino-acid sequence, 1138 residues long: Phosphatidylserine decarboxylase proenzyme 2 (1138 aa).

The 122-residue stretch at 1 to 122 (MRIIKGRKRG…SNSGLSSHSH (122 aa)) folds into the C2 1 domain. Disordered regions lie at residues 90-166 (TGAP…PGST), 269-305 (MRSS…DTDL), and 413-448 (AVSE…REDS). The span at 98–121 (SRPRTTTANTSSSTLSNSGLSSHS) shows a compositional bias: low complexity. Positions 125–135 (RNLNVTSKGNQ) are enriched in polar residues. The span at 136 to 166 (TSTSINSVSSSATPAPSHSSSSLSTTGPGST) shows a compositional bias: low complexity. Positions 293–305 (EIRREKPYSDTDL) are enriched in basic and acidic residues. The span at 421–448 (SVDDEESENQQESDEEFDIYNEDEREDS) shows a compositional bias: acidic residues. The region spanning 478-600 (RRAKSNFFIS…QQQQHENEWI (123 aa)) is the C2 2 domain. Residues Asp-571, Ser-574, and Asp-577 each coordinate Ca(2+). Active-site charge relay system; for autoendoproteolytic cleavage activity residues include Asp-899, His-956, and Ser-1043. Ser-1043 functions as the Schiff-base intermediate with substrate; via pyruvic acid; for decarboxylase activity in the catalytic mechanism. Pyruvic acid (Ser); by autocatalysis is present on Ser-1043.

Belongs to the phosphatidylserine decarboxylase family. PSD-B subfamily. Eukaryotic type II sub-subfamily. As to quaternary structure, heterodimer of a large membrane-associated beta subunit and a small pyruvoyl-containing alpha subunit. Interacts with pstB2/PDR17. This interaction may be a means to structurally tether the donor membrane (ER) harboring PstB2/PDR17 to acceptor membranes (Golgi/endosomes) harboring PSD2 during PtdSer transport to the site of PtdEtn synthesis. The cofactor is pyruvate. Ca(2+) serves as cofactor. Post-translationally, is synthesized initially as an inactive proenzyme. Formation of the active enzyme involves a self-maturation process in which the active site pyruvoyl group is generated from an internal serine residue via an autocatalytic post-translational modification. Two non-identical subunits are generated from the proenzyme in this reaction, and the pyruvate is formed at the N-terminus of the alpha chain, which is derived from the carboxyl end of the proenzyme. The autoendoproteolytic cleavage occurs by a canonical serine protease mechanism, in which the side chain hydroxyl group of the serine supplies its oxygen atom to form the C-terminus of the beta chain, while the remainder of the serine residue undergoes an oxidative deamination to produce ammonia and the pyruvoyl prosthetic group on the alpha chain. During this reaction, the Ser that is part of the protease active site of the proenzyme becomes the pyruvoyl prosthetic group, which constitutes an essential element of the active site of the mature decarboxylase.

Its subcellular location is the golgi apparatus membrane. It is found in the endosome membrane. The catalysed reaction is a 1,2-diacyl-sn-glycero-3-phospho-L-serine + H(+) = a 1,2-diacyl-sn-glycero-3-phosphoethanolamine + CO2. The protein operates within phospholipid metabolism; phosphatidylethanolamine biosynthesis; phosphatidylethanolamine from CDP-diacylglycerol: step 2/2. Catalyzes the formation of phosphatidylethanolamine (PtdEtn) from phosphatidylserine (PtdSer). Plays a central role in phospholipid metabolism and in the interorganelle trafficking of phosphatidylserine. Phosphatidylethanolamine produced by PSD2 is insufficient to completely provide the PtdEtn pool required by mitochondria under respiratory conditions. PSD2 is also involved in the PtdSer transport step to the site of PtdEtn synthesis on the Golgi/endosome membranes. Required for normal heavy metal resistance. This Saccharomyces cerevisiae (strain ATCC 204508 / S288c) (Baker's yeast) protein is Phosphatidylserine decarboxylase proenzyme 2.